Here is a 101-residue protein sequence, read N- to C-terminus: opdI (101 aa).

The chain crosses the membrane as a helical span at residues 30 to 49; that stretch reads GGMGGALKIVFLGMMTYFIA. The tract at residues 56–101 is disordered; sequence SQHPPTDFNAPVQSVPQRAQRPSDTRLQGPVLLASNHPSGDSASPE. 2 stretches are compositionally biased toward polar residues: residues 66-81 and 91-101; these read PVQS…SDTR and NHPSGDSASPE.

Its subcellular location is the membrane. Part of the gene cluster that mediates the biosynthesis of oxopyrrolidines, polyketide-amino acid hybrid compounds with feature structures of tetramic acid. Does not seem to play a role in oxopyrrolidines A and B biosynthesis. This Penicillium oxalicum (strain 114-2 / CGMCC 5302) (Penicillium decumbens) protein is opdI.